A 140-amino-acid chain; its full sequence is Nucleoside diphosphate kinase (140 aa).

Lysine 11, phenylalanine 59, arginine 87, threonine 93, arginine 104, and asparagine 114 together coordinate ATP. Histidine 117 serves as the catalytic Pros-phosphohistidine intermediate.

It belongs to the NDK family. Homotetramer. It depends on Mg(2+) as a cofactor.

The protein resides in the cytoplasm. The enzyme catalyses a 2'-deoxyribonucleoside 5'-diphosphate + ATP = a 2'-deoxyribonucleoside 5'-triphosphate + ADP. It carries out the reaction a ribonucleoside 5'-diphosphate + ATP = a ribonucleoside 5'-triphosphate + ADP. Functionally, major role in the synthesis of nucleoside triphosphates other than ATP. The ATP gamma phosphate is transferred to the NDP beta phosphate via a ping-pong mechanism, using a phosphorylated active-site intermediate. The protein is Nucleoside diphosphate kinase of Rhizobium etli (strain ATCC 51251 / DSM 11541 / JCM 21823 / NBRC 15573 / CFN 42).